A 156-amino-acid chain; its full sequence is RNA polymerase sigma factor SigS (156 aa).

A Polymerase core binding motif is present at residues 29 to 44 (EYYQLLLIKMWQLSQI). The segment at residues 126-145 (QFEIAEIMSLSLSTIKLIKT) is a DNA-binding region (H-T-H motif).

It belongs to the sigma-70 factor family.

Its function is as follows. Sigma factors are initiation factors that promote the attachment of RNA polymerase to specific initiation sites and are then released. Sigma-S contributes to the protection against external stress, thus playing a role in cellular fitness and survival. The protein is RNA polymerase sigma factor SigS (sigS) of Staphylococcus aureus (strain bovine RF122 / ET3-1).